Consider the following 626-residue polypeptide: Glycosyltransferase 25 family member (626 aa).

Residues 1 to 21 form the signal peptide; it reads MLKKQVFYGILLICAFVCIYG. Residues Asn-113, Asn-234, Asn-272, and Asn-533 are each glycosylated (N-linked (GlcNAc...) asparagine). The Prevents secretion from ER signature appears at 623 to 626; sequence HQEL.

Belongs to the glycosyltransferase 25 family.

It is found in the endoplasmic reticulum lumen. This is Glycosyltransferase 25 family member from Drosophila pseudoobscura pseudoobscura (Fruit fly).